We begin with the raw amino-acid sequence, 70 residues long: Large ribosomal subunit protein uL29 (70 aa).

This sequence belongs to the universal ribosomal protein uL29 family.

In Clostridium novyi (strain NT), this protein is Large ribosomal subunit protein uL29.